The sequence spans 561 residues: Cytochrome P450 monooxygenase iboC (561 aa).

A helical transmembrane segment spans residues Arg-8–Ala-28. Heme is bound at residue Cys-484.

It belongs to the cytochrome P450 family. Heme serves as cofactor.

The protein resides in the membrane. It functions in the pathway secondary metabolite biosynthesis. Functionally, cytochrome P450 monooxygenase; part of the gene cluster that mediates the biosynthesis of the psychoactive metabolites ibotenic acid and muscimol. The first committed step is glutamate hydroxylation by the 2-oxoglutarate-dependent dioxygenase iboH, and the last step is decarboxylation of ibotenic acid to muscimol by the decarboxylase iboD. The order of the intermediate reactions is somewhat ambiguous. IboA likely activates the carboxylic acid at position 5 to introduce an amide bond, and the flavin monooxygenase iboF generates the N-O bond. There are several options for the latter step. One option is that iboF directly hydroxylates the amide nitrogen formed by iboA to produce a hydroxamic acid species. Another option is that iboF hydroxylates an external N-containing compound, whose resulting N-O bond is subsequently introduced into the hydroxyglutamate scaffold. The paralogous PLP-dependent cystathionine gamma-synthase-like enzymes iboG1 and iboG2 are likely involved in substitution of the OH group at position 3 by the O-N moiety. The first cyclic intermediate is most probably tricholomic acid which is likely desaturated to ibotenic acid by the cytochrome P450 monooxygenase iboC. The protein is Cytochrome P450 monooxygenase iboC of Amanita muscaria (strain Koide BX008).